Here is a 69-residue protein sequence, read N- to C-terminus: Large ribosomal subunit protein eL38 (69 aa).

It belongs to the eukaryotic ribosomal protein eL38 family.

This Solanum lycopersicum (Tomato) protein is Large ribosomal subunit protein eL38 (RPL38).